A 104-amino-acid chain; its full sequence is Large ribosomal subunit protein uL23 (104 aa).

It belongs to the universal ribosomal protein uL23 family. As to quaternary structure, part of the 50S ribosomal subunit. Contacts protein L29, and trigger factor when it is bound to the ribosome.

Its function is as follows. One of the early assembly proteins it binds 23S rRNA. One of the proteins that surrounds the polypeptide exit tunnel on the outside of the ribosome. Forms the main docking site for trigger factor binding to the ribosome. In Polynucleobacter necessarius subsp. necessarius (strain STIR1), this protein is Large ribosomal subunit protein uL23.